The chain runs to 50 residues: Large ribosomal subunit protein bL33 (50 aa).

This sequence belongs to the bacterial ribosomal protein bL33 family.

This chain is Large ribosomal subunit protein bL33, found in Endomicrobium trichonymphae.